A 424-amino-acid chain; its full sequence is Gamma-glutamyl phosphate reductase (424 aa).

It belongs to the gamma-glutamyl phosphate reductase family.

The protein localises to the cytoplasm. It catalyses the reaction L-glutamate 5-semialdehyde + phosphate + NADP(+) = L-glutamyl 5-phosphate + NADPH + H(+). It functions in the pathway amino-acid biosynthesis; L-proline biosynthesis; L-glutamate 5-semialdehyde from L-glutamate: step 2/2. Functionally, catalyzes the NADPH-dependent reduction of L-glutamate 5-phosphate into L-glutamate 5-semialdehyde and phosphate. The product spontaneously undergoes cyclization to form 1-pyrroline-5-carboxylate. This chain is Gamma-glutamyl phosphate reductase, found in Parvibaculum lavamentivorans (strain DS-1 / DSM 13023 / NCIMB 13966).